The sequence spans 380 residues: Cytochrome b (380 aa).

4 helical membrane-spanning segments follow: residues Phe34 to Met54, Trp78 to Ile99, Trp114 to Leu134, and Phe179 to Thr199. Positions 84 and 98 each coordinate heme b. Positions 183 and 197 each coordinate heme b. A ubiquinone is bound at residue His202. The next 4 membrane-spanning stretches (helical) occupy residues Leu227 to Ser247, Leu289 to His309, Leu321 to Ser341, and Phe348 to Pro368.

Belongs to the cytochrome b family. The cytochrome bc1 complex contains 11 subunits: 3 respiratory subunits (MT-CYB, CYC1 and UQCRFS1), 2 core proteins (UQCRC1 and UQCRC2) and 6 low-molecular weight proteins (UQCRH/QCR6, UQCRB/QCR7, UQCRQ/QCR8, UQCR10/QCR9, UQCR11/QCR10 and a cleavage product of UQCRFS1). This cytochrome bc1 complex then forms a dimer. Heme b is required as a cofactor.

It is found in the mitochondrion inner membrane. Component of the ubiquinol-cytochrome c reductase complex (complex III or cytochrome b-c1 complex) that is part of the mitochondrial respiratory chain. The b-c1 complex mediates electron transfer from ubiquinol to cytochrome c. Contributes to the generation of a proton gradient across the mitochondrial membrane that is then used for ATP synthesis. In Oceanodroma tristrami (Tristram's storm-petrel), this protein is Cytochrome b (MT-CYB).